The following is a 379-amino-acid chain: 1-deoxy-D-xylulose 5-phosphate reductoisomerase (379 aa).

Thr10, Gly11, Ser12, Ile13, Gly36, Asn38, and Asn121 together coordinate NADPH. Lys122 lines the 1-deoxy-D-xylulose 5-phosphate pocket. Residue Glu123 coordinates NADPH. Position 147 (Asp147) interacts with Mn(2+). Positions 148, 149, 173, and 196 each coordinate 1-deoxy-D-xylulose 5-phosphate. Glu149 provides a ligand contact to Mn(2+). Gly202 lines the NADPH pocket. Residues Ser209, Asn214, Lys215, and Glu218 each coordinate 1-deoxy-D-xylulose 5-phosphate. Glu218 serves as a coordination point for Mn(2+).

This sequence belongs to the DXR family. Mg(2+) serves as cofactor. The cofactor is Mn(2+).

It carries out the reaction 2-C-methyl-D-erythritol 4-phosphate + NADP(+) = 1-deoxy-D-xylulose 5-phosphate + NADPH + H(+). Its pathway is isoprenoid biosynthesis; isopentenyl diphosphate biosynthesis via DXP pathway; isopentenyl diphosphate from 1-deoxy-D-xylulose 5-phosphate: step 1/6. Functionally, catalyzes the NADPH-dependent rearrangement and reduction of 1-deoxy-D-xylulose-5-phosphate (DXP) to 2-C-methyl-D-erythritol 4-phosphate (MEP). This Shouchella clausii (strain KSM-K16) (Alkalihalobacillus clausii) protein is 1-deoxy-D-xylulose 5-phosphate reductoisomerase.